Consider the following 131-residue polypeptide: Arsenate reductase (131 aa).

Residues Cys10, Cys82, and Cys89 each act as nucleophile in the active site. Disulfide bonds link Cys10/Cys82 and Cys82/Cys89.

Belongs to the low molecular weight phosphotyrosine protein phosphatase family. Thioredoxin-coupled ArsC subfamily.

The protein localises to the cytoplasm. The enzyme catalyses arsenate + [thioredoxin]-dithiol + H(+) = arsenite + [thioredoxin]-disulfide + H2O. Functionally, catalyzes the reduction of arsenate [As(V)] to arsenite [As(III)]. This is Arsenate reductase from Staphylococcus xylosus.